Reading from the N-terminus, the 98-residue chain is Cystatin-B (98 aa).

N-acetylmethionine is present on M1. A Secondary area of contact motif is present at residues 46-50; the sequence is QVVAG.

It belongs to the cystatin family. Able to form dimers stabilized by noncovalent forces.

The protein resides in the cytoplasm. Its subcellular location is the nucleus. This is an intracellular thiol proteinase inhibitor. Tightly binding reversible inhibitor of cathepsins L, H and B. This Pan troglodytes (Chimpanzee) protein is Cystatin-B (CSTB).